Here is a 305-residue protein sequence, read N- to C-terminus: Tyrosine recombinase XerD (305 aa).

The Core-binding (CB) domain occupies proline 3 to leucine 88. The Tyr recombinase domain occupies serine 109 to alanine 299. Active-site residues include arginine 149, lysine 173, histidine 251, arginine 254, and histidine 277. Tyrosine 286 acts as the O-(3'-phospho-DNA)-tyrosine intermediate in catalysis.

The protein belongs to the 'phage' integrase family. XerD subfamily. In terms of assembly, forms a cyclic heterotetrameric complex composed of two molecules of XerC and two molecules of XerD.

Its subcellular location is the cytoplasm. Site-specific tyrosine recombinase, which acts by catalyzing the cutting and rejoining of the recombining DNA molecules. The XerC-XerD complex is essential to convert dimers of the bacterial chromosome into monomers to permit their segregation at cell division. It also contributes to the segregational stability of plasmids. This chain is Tyrosine recombinase XerD, found in Xanthomonas axonopodis pv. citri (strain 306).